The chain runs to 128 residues: UPF0102 protein GSU0650 (128 aa).

It belongs to the UPF0102 family.

The chain is UPF0102 protein GSU0650 from Geobacter sulfurreducens (strain ATCC 51573 / DSM 12127 / PCA).